Reading from the N-terminus, the 249-residue chain is RING finger protein 223 (249 aa).

Positions 1–44 are disordered; it reads MSSGQQVWHTAVPPPRRSSSIASMPRSPSSAGSPRSPGTPGSER. Positions 17 to 44 are enriched in low complexity; the sequence is RSSSIASMPRSPSSAGSPRSPGTPGSER. The segment at 51 to 102 adopts an RING-type zinc-finger fold; sequence CSICFSGYDNIFKTPKELSCTHVFCLECLARLAAAQPVGRPGGEAVPCPFCR. Residues 199 to 219 traverse the membrane as a helical segment; that stretch reads LVSALLLMLFCVALWPVQCAL. Residues 230–249 form a disordered region; it reads PPRPPATSTAASPLGPLTDN. A compositionally biased stretch (low complexity) spans 235–249; it reads ATSTAASPLGPLTDN.

Its subcellular location is the membrane. The protein is RING finger protein 223 (RNF223) of Homo sapiens (Human).